The sequence spans 61 residues: Translational regulator CsrA (61 aa).

It belongs to the CsrA/RsmA family. Homodimer; the beta-strands of each monomer intercalate to form a hydrophobic core, while the alpha-helices form wings that extend away from the core.

It localises to the cytoplasm. Functionally, a key translational regulator that binds mRNA to regulate translation initiation and/or mRNA stability. Mediates global changes in gene expression, shifting from rapid growth to stress survival by linking envelope stress, the stringent response and the catabolite repression systems. Usually binds in the 5'-UTR; binding at or near the Shine-Dalgarno sequence prevents ribosome-binding, repressing translation, binding elsewhere in the 5'-UTR can activate translation and/or stabilize the mRNA. Its function is antagonized by small RNA(s). The polypeptide is Translational regulator CsrA (Mannheimia succiniciproducens (strain KCTC 0769BP / MBEL55E)).